Consider the following 346-residue polypeptide: MTDHTQQFASDNYSGICPEAWAAMAEANRGHERAYGDDQWTARASDYFRQLFETDCEVFFAFNGTAANSLALAALCQSYHSVICSETAHVETDECGAPEFFSNGSKLLLAQTEVGKLTPASIRDIALKRQDIHYPKPRVVTLTQATEVGTVYRPDELKAISATCKELGLHLHMDGARFSNACAFLGCSPAELSWKAGVDVLCFGGTKNGMAVGEAILFFNRDLAEDFDYRCKQAGQLASKMRFLAAPWVGVLQDDAWLRYADHANRCARLLAELVADVPGVSLMFPVEANGVFLQLSEPAIEALRARGWRFYTFIGEGGARFMCSWDTDIERVRELARDIRLVMGA.

K207 carries the N6-(pyridoxal phosphate)lysine modification.

The protein belongs to the threonine aldolase family. In terms of assembly, homotetramer. It depends on pyridoxal 5'-phosphate as a cofactor.

The enzyme catalyses L-threonine = acetaldehyde + glycine. It catalyses the reaction L-allo-threonine = acetaldehyde + glycine. Functionally, catalyzes the cleavage of L-allo-threonine and L-threonine to glycine and acetaldehyde. The sequence is that of Low specificity L-threonine aldolase (ltaE) from Pseudomonas aeruginosa (strain ATCC 15692 / DSM 22644 / CIP 104116 / JCM 14847 / LMG 12228 / 1C / PRS 101 / PAO1).